The sequence spans 423 residues: Core protease OPG082 (423 aa).

Active-site residues include H241, D248, and C328.

It belongs to the peptidase C57 family.

The protein resides in the virion. In terms of biological role, late protein responsible for processing most or all of the viral core and membrane proteins known to undergo morphogenesis-associated proteolysis. These proteolytic events are involved in the transformation of immature virions (IV) into mature virions (MV). Probably cleaves at least the OPG129, OPG136, OPG098, and OPG144 precursors preferentially at Ala-Gly-|-Ala motifs. Also seems to process Ala-Gly-|-Ser and Ala-Gly-|-Thr motifs. This chain is Core protease OPG082 (OPG083), found in Homo sapiens (Human).